A 207-amino-acid chain; its full sequence is ATP-dependent Clp protease proteolytic subunit (207 aa).

Residues 1–14 constitute a propeptide that is removed on maturation; sequence MSYSGERDNLAPHM. S111 serves as the catalytic Nucleophile. The active site involves H136.

The protein belongs to the peptidase S14 family. Fourteen ClpP subunits assemble into 2 heptameric rings which stack back to back to give a disk-like structure with a central cavity, resembling the structure of eukaryotic proteasomes. Component of the ClpAP and ClpXP complexes.

It is found in the cytoplasm. The enzyme catalyses Hydrolysis of proteins to small peptides in the presence of ATP and magnesium. alpha-casein is the usual test substrate. In the absence of ATP, only oligopeptides shorter than five residues are hydrolyzed (such as succinyl-Leu-Tyr-|-NHMec, and Leu-Tyr-Leu-|-Tyr-Trp, in which cleavage of the -Tyr-|-Leu- and -Tyr-|-Trp bonds also occurs).. Its function is as follows. Cleaves peptides in various proteins in a process that requires ATP hydrolysis. Has a chymotrypsin-like activity. Plays a major role in the degradation of misfolded proteins. This Salmonella paratyphi A (strain ATCC 9150 / SARB42) protein is ATP-dependent Clp protease proteolytic subunit.